We begin with the raw amino-acid sequence, 180 residues long: MTNRLKEKYTNEVVPALTEQFNYTSIMAVPKVDKIVINMGVGDAVNNSKNLDKAVAELALISGQKPLITKAKKSVAAFRLREGMPIGAKVTLRGERMFEFLDKLVTVSLPRVRDFHGVSNKAFDGRGNYTLGVKEQLIFPEINYDDVDKVRGMDIVIVTTANTDEESRELLAKLGMPFAK.

The protein belongs to the universal ribosomal protein uL5 family. In terms of assembly, part of the 50S ribosomal subunit; part of the 5S rRNA/L5/L18/L25 subcomplex. Contacts the 5S rRNA and the P site tRNA. Forms a bridge to the 30S subunit in the 70S ribosome.

In terms of biological role, this is one of the proteins that bind and probably mediate the attachment of the 5S RNA into the large ribosomal subunit, where it forms part of the central protuberance. In the 70S ribosome it contacts protein S13 of the 30S subunit (bridge B1b), connecting the 2 subunits; this bridge is implicated in subunit movement. Contacts the P site tRNA; the 5S rRNA and some of its associated proteins might help stabilize positioning of ribosome-bound tRNAs. This chain is Large ribosomal subunit protein uL5, found in Lactococcus lactis subsp. lactis (strain IL1403) (Streptococcus lactis).